A 97-amino-acid polypeptide reads, in one-letter code: ESAT-6-like protein EsxG (97 aa).

It belongs to the WXG100 family. CFP-10 subfamily. In terms of assembly, forms a tight 1:1 complex with EsxH.

The protein localises to the secreted. The sequence is that of ESAT-6-like protein EsxG from Mycolicibacterium smegmatis (strain ATCC 700084 / mc(2)155) (Mycobacterium smegmatis).